The following is a 199-amino-acid chain: Adenylyl-sulfate kinase (199 aa).

31–38 (GLSGSGKS) contacts ATP. The active-site Phosphoserine intermediate is Ser105.

Belongs to the APS kinase family.

The enzyme catalyses adenosine 5'-phosphosulfate + ATP = 3'-phosphoadenylyl sulfate + ADP + H(+). Its pathway is sulfur metabolism; hydrogen sulfide biosynthesis; sulfite from sulfate: step 2/3. Catalyzes the synthesis of activated sulfate. The polypeptide is Adenylyl-sulfate kinase (Marinobacter nauticus (strain ATCC 700491 / DSM 11845 / VT8) (Marinobacter aquaeolei)).